The following is a 209-amino-acid chain: Cyclin-dependent kinase inhibitor 2 (209 aa).

The segment at Met-1–Asp-32 is required for nuclear localization.

Belongs to the CDI family. ICK/KRP subfamily. Specifically interacts with CDKA-1, but not with CDKB1-1. Phosphorylated.

It is found in the nucleus. The protein localises to the nucleoplasm. In terms of biological role, binds and inhibits CYCD2-1/CDKA-1 complex kinase activity. Regulates cell division which is crucial for plant growth, development and morphogenesis. May regulate early lateral root initiation by blocking the G1/S phase transition. Controls the mitosis-to-endocycle transition and the onset of the endoreduplication cycle during leaf development through inhibition of mitotic CDKA-1 kinase complexes. Specifically targets CDKA-1. This is Cyclin-dependent kinase inhibitor 2 (KRP2) from Arabidopsis thaliana (Mouse-ear cress).